Reading from the N-terminus, the 339-residue chain is MGEKALPVVYKRYICSFADCGASYNKNWKLRAHLCKHTGEKPFPCKEEGCDKGFTSLHHLTRHSITHTGEKNFKCDSDKCDLTFTTKANMKKHFNRFHNLQLCVYVCHFEGCDKAFKKHNQLKVHQFTHTQQLPYKCPHEGCDKSFSVPSCLKRHEKVHAGYPCKKDDSCLFVGKTWTLYLKHVKECHQEPVMCDECKRTFKHKDYLRNHKKTHKKERTVYCCPRDGCERSYTTEFNLQSHMQSFHEEQRPFACEHAECGKSFAMKKSLERHSVVHDPEKRKLKEKCPRPKRSLASRLSGCAPPKSKEKSAAKATEKTGSVVKNKPSGTETKGSLVIEK.

9 C2H2-type zinc fingers span residues 13 to 37 (YICS…LCKH), 43 to 67 (FPCK…SITH), 73 to 98 (FKCD…NRFH), 105 to 129 (YVCH…QFTH), 135 to 159 (YKCP…EKVH), 162 to 188 (YPCK…KECH), 192 to 214 (VMCD…KKTH), 221 to 246 (YCCP…QSFH), and 252 to 276 (FACE…SVVH). 2 stretches are compositionally biased toward basic and acidic residues: residues 275 to 288 (VHDP…EKCP) and 305 to 316 (KSKEKSAAKATE). The disordered stretch occupies residues 275–339 (VHDPEKRKLK…ETKGSLVIEK (65 aa)).

Synthesized in oocytes and, in much lower levels, in somatic cells.

It localises to the nucleus. Involved in ribosomal large subunit biogenesis. Interacts with the internal control region (ICR) of approximately 50 bases within the 5S RNA genes, is required for correct transcription of these genes by RNA polymerase III. Also binds the transcribed 5S RNA's. The sequence is that of Transcription factor IIIA (gtf3a) from Xenopus borealis (Kenyan clawed frog).